Reading from the N-terminus, the 157-residue chain is MPVDPEKLAKLQKSSAKKVGGSRVKAKKNIKTEQDDTKLIEALGKLKATKIEGVEEANFFREDGKVLHFNRVGVQGAPASNTFAFTGYPQEKNITQLIPQILPQLGAENLEILRQLAEQIQAGKTPKDFNTGSANAAADAGGEDIPDLVDQKFDDVE.

Residues 1 to 28 (MPVDPEKLAKLQKSSAKKVGGSRVKAKK) are disordered. In terms of domain architecture, NAC-A/B spans 33-98 (EQDDTKLIEA…PQEKNITQLI (66 aa)). The tract at residues 124–157 (KTPKDFNTGSANAAADAGGEDIPDLVDQKFDDVE) is disordered.

This sequence belongs to the NAC-beta family. As to quaternary structure, part of the nascent polypeptide-associated complex (NAC), consisting of EGD2 and EGD1. NAC associates with ribosomes via EGD1.

The protein resides in the cytoplasm. Its subcellular location is the nucleus. Functionally, component of the nascent polypeptide-associated complex (NAC), a dynamic component of the ribosomal exit tunnel, protecting the emerging polypeptides from interaction with other cytoplasmic proteins to ensure appropriate nascent protein targeting. The NAC complex also promotes mitochondrial protein import by enhancing productive ribosome interactions with the outer mitochondrial membrane and blocks the inappropriate interaction of ribosomes translating non-secretory nascent polypeptides with translocation sites in the membrane of the endoplasmic reticulum. EGD1 may act as a transcription factor that exert a negative effect on the expression of several genes that are transcribed by RNA polymerase II. This is Nascent polypeptide-associated complex subunit beta (EGD1) from Candida albicans (strain SC5314 / ATCC MYA-2876) (Yeast).